The primary structure comprises 206 residues: Holliday junction branch migration complex subunit RuvA (206 aa).

Residues 1 to 63 (MIASLRGTVI…EDAMKLYGFI (63 aa)) form a domain I region. The segment at 64–142 (DNESREMFSV…AFAAGVVDEA (79 aa)) is domain II. A flexible linker region spans residues 143–153 (GEQISLPNANI). The domain III stretch occupies residues 154–206 (ASEVVVEQVSQALVGLGFSEKQSDDAVSFVLAADPSLDTSGALRAALAKLSGK).

Belongs to the RuvA family. In terms of assembly, homotetramer. Forms an RuvA(8)-RuvB(12)-Holliday junction (HJ) complex. HJ DNA is sandwiched between 2 RuvA tetramers; dsDNA enters through RuvA and exits via RuvB. An RuvB hexamer assembles on each DNA strand where it exits the tetramer. Each RuvB hexamer is contacted by two RuvA subunits (via domain III) on 2 adjacent RuvB subunits; this complex drives branch migration. In the full resolvosome a probable DNA-RuvA(4)-RuvB(12)-RuvC(2) complex forms which resolves the HJ.

It localises to the cytoplasm. The RuvA-RuvB-RuvC complex processes Holliday junction (HJ) DNA during genetic recombination and DNA repair, while the RuvA-RuvB complex plays an important role in the rescue of blocked DNA replication forks via replication fork reversal (RFR). RuvA specifically binds to HJ cruciform DNA, conferring on it an open structure. The RuvB hexamer acts as an ATP-dependent pump, pulling dsDNA into and through the RuvAB complex. HJ branch migration allows RuvC to scan DNA until it finds its consensus sequence, where it cleaves and resolves the cruciform DNA. The chain is Holliday junction branch migration complex subunit RuvA from Corynebacterium glutamicum (strain R).